Reading from the N-terminus, the 326-residue chain is Interleukin-1-binding protein (326 aa).

An N-terminal signal peptide occupies residues 1–18 (MSIPPVIFLPIFFYSSFV). Ig-like C2-type domains follow at residues 24–115 (PECI…LNLT), 122–208 (SNID…YDVT), and 221–322 (PPTM…KTVT). A disulfide bridge connects residues cysteine 48 and cysteine 99. Asparagine 80, asparagine 103, and asparagine 113 each carry an N-linked (GlcNAc...) asparagine; by host glycan. A disulfide bond links cysteine 143 and cysteine 194. A glycan (N-linked (GlcNAc...) asparagine; by host) is linked at asparagine 237. A disulfide bridge connects residues cysteine 242 and cysteine 309.

The protein belongs to the interleukin-1 receptor family. In terms of assembly, interacts with mouse Il1b.

The protein resides in the secreted. Functionally, may reduce the host inflammatory response by interacting with inteleukin-1 beta (Il1b) and thus decreasing the association between IL1B and its cellular receptor. The chain is Interleukin-1-binding protein (OPG201) from Bos taurus (Bovine).